Consider the following 159-residue polypeptide: Single-stranded DNA-binding protein 2 (159 aa).

Positions M2–E104 constitute an SSB domain. Positions R106–F159 are disordered. Residues S114–N127 show a composition bias toward low complexity. Positions K128–F143 are enriched in polar residues.

As to quaternary structure, homotetramer.

In Listeria innocua serovar 6a (strain ATCC BAA-680 / CLIP 11262), this protein is Single-stranded DNA-binding protein 2 (ssb2).